Consider the following 312-residue polypeptide: Olfactory receptor 14C36 (312 aa).

Residues Met1–Ile23 are Extracellular-facing. N-linked (GlcNAc...) asparagine glycosylation occurs at Asn3. Residues Leu24 to Val44 traverse the membrane as a helical segment. Over Thr45–Ser52 the chain is Cytoplasmic. The chain crosses the membrane as a helical span at residues Leu53 to Ser73. Residues Val74–Ala97 lie on the Extracellular side of the membrane. An intrachain disulfide couples Cys95 to Cys187. The helical transmembrane segment at Gln98–His118 threads the bilayer. Residues Asp119–Arg137 are Cytoplasmic-facing. The chain crosses the membrane as a helical span at residues Ile138 to Thr158. Over Gly159–Glu194 the chain is Extracellular. Residues Val195–Ser215 form a helical membrane-spanning segment. Topologically, residues Tyr216–Ala235 are cytoplasmic. A helical transmembrane segment spans residues Phe236 to Val256. Residues Tyr257–Asp269 lie on the Extracellular side of the membrane. The chain crosses the membrane as a helical span at residues Leu270 to Leu290. Residues Arg291–Val312 are Cytoplasmic-facing.

It belongs to the G-protein coupled receptor 1 family.

The protein localises to the cell membrane. Functionally, odorant receptor. The chain is Olfactory receptor 14C36 (OR14C36) from Homo sapiens (Human).